The sequence spans 176 residues: Inner membrane-spanning protein YciB (176 aa).

The next 5 membrane-spanning stretches (helical) occupy residues 24-44, 49-69, 76-96, 121-141, and 149-169; these read TATA…AFRH, PMLW…LVLH, WKPT…ALGF, YVWA…AYNF, and FKLF…SLWL.

Belongs to the YciB family.

It localises to the cell inner membrane. Its function is as follows. Plays a role in cell envelope biogenesis, maintenance of cell envelope integrity and membrane homeostasis. This Paraburkholderia phymatum (strain DSM 17167 / CIP 108236 / LMG 21445 / STM815) (Burkholderia phymatum) protein is Inner membrane-spanning protein YciB.